We begin with the raw amino-acid sequence, 1008 residues long: RNA cytidine acetyltransferase (1008 aa).

ATP contacts are provided by residues 282–291 and R443; that span reads GRGKSAALGL. The N-acetyltransferase domain maps to 531-713; it reads CLLGPVQRMD…VPVYLSQKSN (183 aa). Residues 601–603, 608–614, and N700 contribute to the acetyl-CoA site; these read VAT and QRMGYGK. S907 carries the phosphoserine modification. The segment at 950–1008 is disordered; the sequence is ALETNGTGGGSGLLSVKSGVKRLDGPIETREDGDLAAPLSKKKKKNNPKQRRSQGKSLI. Basic and acidic residues predominate over residues 970-982; sequence KRLDGPIETREDG. Basic residues predominate over residues 989 to 1008; it reads SKKKKKNNPKQRRSQGKSLI.

The protein belongs to the RNA cytidine acetyltransferase family. NAT10 subfamily. Component of the PRC1 complex (PSC, PC, PH and dRING1) in 0-12 hours Drosophila embryos. This complex is distinct from the Esc/E(z) complex, which contains many other PcG proteins like Esc, E(z), Su(z)12, HDAC1/Rpd3, Caf1-55 and probably Pho. The two complexes however cooperate and interact together during the first 3 hours of development to establish PcG silencing. Part of the small subunit (SSU) processome, composed of more than 70 proteins and the RNA chaperone small nucleolar RNA (snoRNA) U3.

The protein resides in the nucleus. It localises to the nucleolus. It catalyses the reaction a cytidine in 18S rRNA + acetyl-CoA + ATP + H2O = an N(4)-acetylcytidine in 18S rRNA + ADP + phosphate + CoA + H(+). It carries out the reaction a cytidine in tRNA + acetyl-CoA + ATP + H2O = an N(4)-acetylcytidine in tRNA + ADP + phosphate + CoA + H(+). RNA cytidine acetyltransferase with specificity toward both 18S rRNA and tRNAs. Catalyzes the formation of N(4)-acetylcytidine (ac4C) in 18S rRNA. Required for early nucleolar cleavages of precursor rRNA at sites A0, A1 and A2 during 18S rRNA synthesis. Catalyzes the formation of ac4C in serine and leucine tRNAs. Requires a tRNA-binding adapter protein for full tRNA acetyltransferase activity but not for 18S rRNA acetylation. Polycomb group (PcG) protein. PcG proteins act by forming multiprotein complexes, which are required to maintain the transcriptionally repressive state of homeotic genes throughout development. PcG proteins are not required to initiate repression, but to maintain it during later stages of development. They probably act via the methylation of histones, rendering chromatin heritably changed in its expressibility. Part of the small subunit (SSU) processome, first precursor of the small eukaryotic ribosomal subunit. During the assembly of the SSU processome in the nucleolus, many ribosome biogenesis factors, an RNA chaperone and ribosomal proteins associate with the nascent pre-rRNA and work in concert to generate RNA folding, modifications, rearrangements and cleavage as well as targeted degradation of pre-ribosomal RNA by the RNA exosome. The protein is RNA cytidine acetyltransferase (l(1)G0020) of Drosophila melanogaster (Fruit fly).